Reading from the N-terminus, the 343-residue chain is Anthranilate phosphoribosyltransferase (343 aa).

Residues Gly-84, 87–88, Thr-92, 94–97, 112–120, and Ser-124 each bind 5-phospho-alpha-D-ribose 1-diphosphate; these read GD, NIST, and KHGNRGVSS. Gly-84 contributes to the anthranilate binding site. Ser-96 is a Mg(2+) binding site. Asn-115 lines the anthranilate pocket. An anthranilate-binding site is contributed by Arg-170. The Mg(2+) site is built by Asp-229 and Glu-230.

Belongs to the anthranilate phosphoribosyltransferase family. Homodimer. It depends on Mg(2+) as a cofactor.

The enzyme catalyses N-(5-phospho-beta-D-ribosyl)anthranilate + diphosphate = 5-phospho-alpha-D-ribose 1-diphosphate + anthranilate. The protein operates within amino-acid biosynthesis; L-tryptophan biosynthesis; L-tryptophan from chorismate: step 2/5. Catalyzes the transfer of the phosphoribosyl group of 5-phosphorylribose-1-pyrophosphate (PRPP) to anthranilate to yield N-(5'-phosphoribosyl)-anthranilate (PRA). The chain is Anthranilate phosphoribosyltransferase from Burkholderia cenocepacia (strain ATCC BAA-245 / DSM 16553 / LMG 16656 / NCTC 13227 / J2315 / CF5610) (Burkholderia cepacia (strain J2315)).